The following is a 183-amino-acid chain: Translation initiation factor IF-3 (183 aa).

This sequence belongs to the IF-3 family. As to quaternary structure, monomer.

The protein resides in the cytoplasm. IF-3 binds to the 30S ribosomal subunit and shifts the equilibrium between 70S ribosomes and their 50S and 30S subunits in favor of the free subunits, thus enhancing the availability of 30S subunits on which protein synthesis initiation begins. This is Translation initiation factor IF-3 from Pseudomonas entomophila (strain L48).